A 590-amino-acid chain; its full sequence is Potassium-transporting ATPase potassium-binding subunit (590 aa).

10 helical membrane passes run 11-31 (IFIA…AAVF), 64-84 (TAYC…TYLI), 136-156 (GLAT…IAFI), 178-198 (ILWV…SQGV), 273-293 (MLEM…LGQM), 301-321 (WAVL…CYWA), 403-423 (AGLY…GLMV), 442-462 (AMLY…VAVL), 511-531 (LGFA…ALAG), and 552-572 (LFTV…FLPA).

It belongs to the KdpA family. As to quaternary structure, the system is composed of three essential subunits: KdpA, KdpB and KdpC.

The protein resides in the cell inner membrane. Part of the high-affinity ATP-driven potassium transport (or Kdp) system, which catalyzes the hydrolysis of ATP coupled with the electrogenic transport of potassium into the cytoplasm. This subunit binds the periplasmic potassium ions and delivers the ions to the membrane domain of KdpB through an intramembrane tunnel. This is Potassium-transporting ATPase potassium-binding subunit from Acidobacterium capsulatum (strain ATCC 51196 / DSM 11244 / BCRC 80197 / JCM 7670 / NBRC 15755 / NCIMB 13165 / 161).